The primary structure comprises 921 residues: Isoleucine--tRNA ligase 1 (921 aa).

Positions 57–67 (PYANGDIHMGH) match the 'HIGH' region motif. Glutamate 552 lines the L-isoleucyl-5'-AMP pocket. A 'KMSKS' region motif is present at residues 593–597 (KMSKS). Lysine 596 is a binding site for ATP. Zn(2+) is bound by residues cysteine 888, cysteine 891, cysteine 908, and cysteine 911.

The protein belongs to the class-I aminoacyl-tRNA synthetase family. IleS type 1 subfamily. In terms of assembly, monomer. It depends on Zn(2+) as a cofactor.

The protein resides in the cytoplasm. It catalyses the reaction tRNA(Ile) + L-isoleucine + ATP = L-isoleucyl-tRNA(Ile) + AMP + diphosphate. Its function is as follows. Catalyzes the attachment of isoleucine to tRNA(Ile). As IleRS can inadvertently accommodate and process structurally similar amino acids such as valine, to avoid such errors it has two additional distinct tRNA(Ile)-dependent editing activities. One activity is designated as 'pretransfer' editing and involves the hydrolysis of activated Val-AMP. The other activity is designated 'posttransfer' editing and involves deacylation of mischarged Val-tRNA(Ile). The polypeptide is Isoleucine--tRNA ligase 1 (Bacillus thuringiensis subsp. konkukian (strain 97-27)).